A 418-amino-acid polypeptide reads, in one-letter code: MTIEQFNFAGKKAFVRVDFNVPLDDNFKITDDTRIRAALPTLRKIIADGGMTIIGSHLGRPKGVAPEFSLRHILPHVSELLGVDVLFADDCIGADAMDKAAKLKAGQVLLLENLRFYAEEEGKPRGLSDDASDEEKAAAKKAVKAAQKEFTQKLASMADCYVNDAFGTAHRAHASTALIADYFDRDHKMFGYLMEKEVKAVERVLHDIKRPFTAIMGGSKVSTKIEIIENLLNKVDNLILTGGMTYTFTKAAGGRIGLSIVEDDKLDLARDIVKKAAEKGVNLILSVDTKVADRFDNDAATQVCSNMEIPDDWMGMDIGPRSIEKFRKVILESKTILWNGPTGVFEFDNFSIGSKAVGEAIVEATANGAFSLVGGGDSVACVNKFGLADKVSYVSTGGGALLEAIEGKTLPGIAAIQG.

Substrate is bound by residues 18–20, arginine 34, 57–60, arginine 115, and arginine 171; these read DFN and HLGR. ATP contacts are provided by residues lysine 224, glycine 315, glutamate 346, and 375-378; that span reads GGDS.

This sequence belongs to the phosphoglycerate kinase family. In terms of assembly, monomer.

The protein resides in the cytoplasm. It catalyses the reaction (2R)-3-phosphoglycerate + ATP = (2R)-3-phospho-glyceroyl phosphate + ADP. It participates in carbohydrate degradation; glycolysis; pyruvate from D-glyceraldehyde 3-phosphate: step 2/5. The polypeptide is Phosphoglycerate kinase (Porphyromonas gingivalis (strain ATCC BAA-308 / W83)).